We begin with the raw amino-acid sequence, 666 residues long: Collagen alpha-1(XXV) chain (666 aa).

Residues 1–24 are disordered; that stretch reads MLVKKLAGKGGGRESGSEDPRPLG. Over 1 to 33 the chain is Cytoplasmic; the sequence is MLVKKLAGKGGGRESGSEDPRPLGQRCAGTMPS. Residues 11–21 show a composition bias toward basic and acidic residues; the sequence is GGRESGSEDPR. A helical; Signal-anchor for type II membrane protein membrane pass occupies residues 34–54; sequence CTALATLLSVVAVAFCFYLGV. Over 55–666 the chain is Extracellular; sequence KTNDLQARIA…GLPMPGCWQK (612 aa). Residues 116–168 are disordered; sequence LECNCPAGPPGKRGKRGRRGESGPPGQPGPQGPPGPKGDKGEQGDQGPRMVFP. The Collagen-like 1 domain occupies 121–164; that stretch reads PAGPPGKRGKRGRRGESGPPGQPGPQGPPGPKGDKGEQGDQGPR. Residues 140 to 151 are compositionally biased toward pro residues; that stretch reads PGQPGPQGPPGP. The interval 181–188 is interaction with amyloid-beta peptide; that stretch reads LIKRRLIK. 2 disordered regions span residues 189–428 and 445–666; these read GDQG…ATEI and LTVT…CWQK. Collagen-like domains are found at residues 192–247, 249–308, 311–370, 373–425, 455–514, 529–588, and 589–648; these read GQAG…QKGS, GAPG…PGSS, GIKG…AGPP, GERG…DPGA, GPQG…KGEK, GPPG…KGAM, and GEPG…DGLD. The span at 196 to 208 shows a compositional bias: pro residues; the sequence is PPGPPGPPGPRGP. Over residues 230-245 the composition is skewed to low complexity; it reads PGEQGLMGPLGPPGQK. A compositionally biased stretch (basic and acidic residues) spans 280–290; sequence EPGKEGEKGDA. Residues 336 to 358 show a composition bias toward low complexity; it reads LPGIKGEPGFIGPQGEPGLPGLP. 2 stretches are compositionally biased toward basic and acidic residues: residues 361–377 and 398–407; these read KGDR…ERGD and SKGDRGDKGD. The segment covering 457-466 has biased composition (low complexity); sequence QGLQGPKGEQ. Positions 494–503 are enriched in gly residues; it reads GEKGGLGLPG. Over residues 528–543 the composition is skewed to pro residues; it reads IGPPGPPGPHGPPGPM. Residues 615–638 show a composition bias toward basic and acidic residues; sequence RGEKGDLGEKGEKGFRGVKGEKGE.

Forms homodimers and homotrimers. Binds to the fibrillized forms of amyloid-beta protein 40 (beta-APP40) and amyloid-betad protein 42 (beta-APP42). Found associated with beta-APP42 more frequently than with beta-APP40. Undergoes proteolytic cleavage by furin protease to yield the soluble collagen-like Alzheimer amyloid plaque component. Post-translationally, glycosylated. In terms of processing, hydroxylated on proline and lysine residues. Expressed predominantly in neurons with low levels also detected in heart, testis and eye.

It localises to the membrane. In terms of biological role, inhibits fibrillization of amyloid-beta peptide during the elongation phase. Has also been shown to assemble amyloid fibrils into protease-resistant aggregates. Binds heparin. This Mus musculus (Mouse) protein is Collagen alpha-1(XXV) chain.